The sequence spans 380 residues: 4-hydroxy-3-methylbut-2-en-1-yl diphosphate synthase (flavodoxin) (380 aa).

4 residues coordinate [4Fe-4S] cluster: C280, C283, C315, and E322.

This sequence belongs to the IspG family. It depends on [4Fe-4S] cluster as a cofactor.

The enzyme catalyses (2E)-4-hydroxy-3-methylbut-2-enyl diphosphate + oxidized [flavodoxin] + H2O + 2 H(+) = 2-C-methyl-D-erythritol 2,4-cyclic diphosphate + reduced [flavodoxin]. It participates in isoprenoid biosynthesis; isopentenyl diphosphate biosynthesis via DXP pathway; isopentenyl diphosphate from 1-deoxy-D-xylulose 5-phosphate: step 5/6. Converts 2C-methyl-D-erythritol 2,4-cyclodiphosphate (ME-2,4cPP) into 1-hydroxy-2-methyl-2-(E)-butenyl 4-diphosphate. In Cutibacterium acnes (strain DSM 16379 / KPA171202) (Propionibacterium acnes), this protein is 4-hydroxy-3-methylbut-2-en-1-yl diphosphate synthase (flavodoxin).